A 65-amino-acid chain; its full sequence is Large ribosomal subunit protein bL28 (65 aa).

Belongs to the bacterial ribosomal protein bL28 family.

This Pseudothermotoga lettingae (strain ATCC BAA-301 / DSM 14385 / NBRC 107922 / TMO) (Thermotoga lettingae) protein is Large ribosomal subunit protein bL28.